The following is a 394-amino-acid chain: G2/mitotic-specific cyclin-B (394 aa).

Residues 360–394 (QSHPSPNSRLDQEEDMASSKFMSDQQATQELKSIR) form a disordered region. The span at 379 to 394 (KFMSDQQATQELKSIR) shows a compositional bias: polar residues.

This sequence belongs to the cyclin family. Cyclin AB subfamily. As to quaternary structure, interacts with the CDK1 protein kinase to form a serine/threonine kinase holoenzyme complex also known as maturation promoting factor (MPF). The cyclin subunit imparts substrate specificity to the complex.

Essential for the control of the cell cycle at the G2/M (mitosis) transition. The polypeptide is G2/mitotic-specific cyclin-B (Patiria pectinifera (Starfish)).